Consider the following 227-residue polypeptide: Protein M1425_1941 (227 aa).

One can recognise an AMMECR1 domain in the interval 15–209; the sequence is EIGRFLIEIA…ETRPDGSDII (195 aa).

The protein is Protein M1425_1941 of Saccharolobus islandicus (strain M.14.25 / Kamchatka #1) (Sulfolobus islandicus).